Consider the following 323-residue polypeptide: Mycothiol acetyltransferase (323 aa).

N-acetyltransferase domains lie at 5–145 (LTTD…LPLR) and 168–323 (VEIR…PEER). Glu36 serves as a coordination point for 1D-myo-inositol 2-(L-cysteinylamino)-2-deoxy-alpha-D-glucopyranoside. 83 to 85 (VAV) contacts acetyl-CoA. Glu195, Lys236, and Glu252 together coordinate 1D-myo-inositol 2-(L-cysteinylamino)-2-deoxy-alpha-D-glucopyranoside. Acetyl-CoA contacts are provided by residues 256 to 258 (VGV) and 263 to 269 (QGSGLGR). Tyr290 contacts 1D-myo-inositol 2-(L-cysteinylamino)-2-deoxy-alpha-D-glucopyranoside. 295-300 (NRPAVQ) provides a ligand contact to acetyl-CoA.

Belongs to the acetyltransferase family. MshD subfamily. In terms of assembly, monomer.

It carries out the reaction 1D-myo-inositol 2-(L-cysteinylamino)-2-deoxy-alpha-D-glucopyranoside + acetyl-CoA = mycothiol + CoA + H(+). Catalyzes the transfer of acetyl from acetyl-CoA to desacetylmycothiol (Cys-GlcN-Ins) to form mycothiol. The sequence is that of Mycothiol acetyltransferase from Thermobifida fusca (strain YX).